Here is a 60-residue protein sequence, read N- to C-terminus: Large ribosomal subunit protein uL30 (60 aa).

The protein belongs to the universal ribosomal protein uL30 family. As to quaternary structure, part of the 50S ribosomal subunit.

The chain is Large ribosomal subunit protein uL30 from Shewanella sp. (strain ANA-3).